A 111-amino-acid polypeptide reads, in one-letter code: HTH-type transcriptional regulator SinR (111 aa).

The HTH cro/C1-type domain occupies 6 to 61 (IKQYRKEKGYSLSELAEKAGVAKSYLSSIERNLQTNPSIQFLEKVSAVLDVSVHTL). The segment at residues 17-36 (LSELAEKAGVAKSYLSSIER) is a DNA-binding region (H-T-H motif). The Sin domain maps to 65-103 (KHETEYDGQLDSEWEKLVRDAMTSGVSKKQFREFLDYQK).

In terms of assembly, homotetramer in the absence of SinI. Heterodimer with SinI. Interaction with SinI disrupts the SinR tetramer and its repressor activity. Interacts with hpr.

Functionally, negative as well as positive regulator of alternate developmental processes that are induced at the end of vegetative growth in response to nutrient depletion. Binds to the alkaline protease (aprE) gene at two sites. Also acts as a repressor of the key sporulation gene spo0A. Negatively regulates transcription of the eps operon, which is responsible for the biosynthesis of an exopolysaccharide involved in biofilm formation; therefore it could govern the transition between a state in which bacteria swim or swarm and a state in which bacteria assemble into multicellular communities. Acts with Hpr as a corepressor of epr expression. Also negatively regulates transcription of the lutABC operon, which is required for lactate utilization. Repressor activity is regulated by SinI. The protein is HTH-type transcriptional regulator SinR (sinR) of Bacillus subtilis (strain 168).